The sequence spans 611 residues: Probable potassium transport system protein Kup (611 aa).

13 consecutive transmembrane segments (helical) span residues 24–44 (LVFG…FLFL), 55–75 (VSLI…FLAM), 102–122 (VAVF…ECVI), 143–163 (LIAQ…LFLF), 175–195 (FGPV…ISVA), 218–238 (LLGF…EALF), 252–272 (AWGF…AYLL), 275–295 (TDVI…LYIP), 296–316 (FLLL…SGIF), 344–364 (IYIN…LLIF), 374–394 (YGLA…AIFL), 400–420 (LYMG…LSTV), and 423–443 (ITHG…IVII).

The protein belongs to the HAK/KUP transporter (TC 2.A.72) family.

Its subcellular location is the cell membrane. It catalyses the reaction K(+)(in) + H(+)(in) = K(+)(out) + H(+)(out). In terms of biological role, transport of potassium into the cell. Likely operates as a K(+):H(+) symporter. In Methanospirillum hungatei JF-1 (strain ATCC 27890 / DSM 864 / NBRC 100397 / JF-1), this protein is Probable potassium transport system protein Kup.